The chain runs to 425 residues: UPF0761 membrane protein XCV0968 (425 aa).

The next 6 membrane-spanning stretches (helical) occupy residues 48-68 (VFAL…FPAF), 105-125 (FTVA…HSIE), 154-174 (GTML…LPLF), 182-202 (LAEF…IVLI), 216-236 (ALPG…GFGF), and 250-270 (ALSA…SVLL).

This sequence belongs to the UPF0761 family.

It is found in the cell inner membrane. The chain is UPF0761 membrane protein XCV0968 from Xanthomonas euvesicatoria pv. vesicatoria (strain 85-10) (Xanthomonas campestris pv. vesicatoria).